The primary structure comprises 350 residues: Ketol-acid reductoisomerase (NADP(+)) 2 (350 aa).

Residues 3–183 (ATIWYEKDAD…GALRAGAIKT (181 aa)) enclose the KARI N-terminal Rossmann domain. Residues 26-29 (YGSQ), Arg49, Ser52, Ser54, and 84-87 (DQYQ) contribute to the NADP(+) site. His109 is an active-site residue. Residue Gly135 participates in NADP(+) binding. The KARI C-terminal knotted domain occupies 184 to 327 (TFTEETETDL…PKLRAMFSWN (144 aa)). Residues Asp192, Glu196, Glu228, and Glu232 each coordinate Mg(2+). Ser253 is a substrate binding site. The interval 331-350 (AKDKDETESFNGKIARTQVQ) is disordered.

This sequence belongs to the ketol-acid reductoisomerase family. The cofactor is Mg(2+).

It carries out the reaction (2R)-2,3-dihydroxy-3-methylbutanoate + NADP(+) = (2S)-2-acetolactate + NADPH + H(+). The catalysed reaction is (2R,3R)-2,3-dihydroxy-3-methylpentanoate + NADP(+) = (S)-2-ethyl-2-hydroxy-3-oxobutanoate + NADPH + H(+). The protein operates within amino-acid biosynthesis; L-isoleucine biosynthesis; L-isoleucine from 2-oxobutanoate: step 2/4. Its pathway is amino-acid biosynthesis; L-valine biosynthesis; L-valine from pyruvate: step 2/4. Its function is as follows. Involved in the biosynthesis of branched-chain amino acids (BCAA). Catalyzes an alkyl-migration followed by a ketol-acid reduction of (S)-2-acetolactate (S2AL) to yield (R)-2,3-dihydroxy-isovalerate. In the isomerase reaction, S2AL is rearranged via a Mg-dependent methyl migration to produce 3-hydroxy-3-methyl-2-ketobutyrate (HMKB). In the reductase reaction, this 2-ketoacid undergoes a metal-dependent reduction by NADPH to yield (R)-2,3-dihydroxy-isovalerate. The polypeptide is Ketol-acid reductoisomerase (NADP(+)) 2 (Bifidobacterium longum (strain NCC 2705)).